A 200-amino-acid polypeptide reads, in one-letter code: Transcriptional repressor NrdR (200 aa).

The segment at 3-34 (CPRCGKQEIRVLESRSAEGGQSVRRRRECMSC) is a zinc-finger region. An ATP-cone domain is found at 49–139 (IMVIKRDGSR…VYRKFQGIKD (91 aa)). The interval 158-200 (LERPLRNSPPSESESTASPDWVGGIPQLLDQNDTSSNLSEIPK) is disordered. The segment covering 186-200 (LDQNDTSSNLSEIPK) has biased composition (polar residues).

Belongs to the NrdR family. The cofactor is Zn(2+).

Negatively regulates transcription of bacterial ribonucleotide reductase nrd genes and operons by binding to NrdR-boxes. This is Transcriptional repressor NrdR from Synechococcus sp. (strain JA-3-3Ab) (Cyanobacteria bacterium Yellowstone A-Prime).